Here is a 147-residue protein sequence, read N- to C-terminus: Large ribosomal subunit protein bL9 (147 aa).

Belongs to the bacterial ribosomal protein bL9 family.

Functionally, binds to the 23S rRNA. The chain is Large ribosomal subunit protein bL9 from Bdellovibrio bacteriovorus (strain ATCC 15356 / DSM 50701 / NCIMB 9529 / HD100).